A 130-amino-acid chain; its full sequence is Small ribosomal subunit protein uS8B (130 aa).

This sequence belongs to the universal ribosomal protein uS8 family.

This is Small ribosomal subunit protein uS8B (RpS15Ab) from Drosophila melanogaster (Fruit fly).